The chain runs to 176 residues: Nucleoside triphosphate/diphosphate phosphatase (176 aa).

Arg23 acts as the Proton donor in catalysis. Residues Asn87, Asp103, Asp105, Asp107, Asp120, and Glu123 each coordinate Mg(2+).

Belongs to the Ntdp family. Mg(2+) is required as a cofactor.

The catalysed reaction is a ribonucleoside 5'-triphosphate + H2O = a ribonucleoside 5'-diphosphate + phosphate + H(+). It catalyses the reaction a ribonucleoside 5'-diphosphate + H2O = a ribonucleoside 5'-phosphate + phosphate + H(+). Its function is as follows. Has nucleoside phosphatase activity towards nucleoside triphosphates and nucleoside diphosphates. This chain is Nucleoside triphosphate/diphosphate phosphatase (yjjG), found in Lactococcus lactis subsp. lactis (strain IL1403) (Streptococcus lactis).